The sequence spans 938 residues: Chaperone protein ClpD1, chloroplastic (938 aa).

Residues 1-83 constitute a chloroplast transit peptide; sequence MEVCCCSTSS…FERFTERAVK (83 aa). Repeat stretches follow at residues 84-145 and 159-224; these read AVVL…TPGA and FSGS…LQAE. One can recognise a Clp R domain in the interval 84–224; the sequence is AVVLSQREAK…SVALTRLQAE (141 aa). Residues 234 to 255 form a disordered region; that stretch reads GASSFKVPKKSPAGAGRSAFSK. The interval 266–519 is i; the sequence is LDQFCLDLTT…RMESFNRKKE (254 aa). Residues 311–318 and 660–667 each bind ATP; these read GEAGVGKT and GPTGVGKT. The interval 586–777 is II; that stretch reads VGTEEIARVA…LIVMTSNIGS (192 aa).

Belongs to the ClpA/ClpB family. ClpD subfamily. Expressed in stems, culms and leaves.

It localises to the plastid. The protein localises to the chloroplast. Molecular chaperone that may function in heat stress response. May interact with a ClpP-like protease involved in degradation of denatured proteins in the chloroplast. Chaperone involved in response to abiotic stresses. Plays a positive role during dehydration and salt stress. The chain is Chaperone protein ClpD1, chloroplastic from Oryza sativa subsp. japonica (Rice).